Here is a 382-residue protein sequence, read N- to C-terminus: Galactokinase (382 aa).

34-37 (EHTD) provides a ligand contact to substrate. Residue 124–130 (GAGLSSS) participates in ATP binding. Positions 130 and 162 each coordinate Mg(2+). Residue Asp174 is the Proton acceptor of the active site. Substrate is bound at residue Tyr223.

It belongs to the GHMP kinase family. GalK subfamily.

Its subcellular location is the cytoplasm. The enzyme catalyses alpha-D-galactose + ATP = alpha-D-galactose 1-phosphate + ADP + H(+). It functions in the pathway carbohydrate metabolism; galactose metabolism. Its function is as follows. Catalyzes the transfer of the gamma-phosphate of ATP to D-galactose to form alpha-D-galactose-1-phosphate (Gal-1-P). In Salmonella paratyphi A (strain ATCC 9150 / SARB42), this protein is Galactokinase.